We begin with the raw amino-acid sequence, 485 residues long: Bifunctional protein GlmU (485 aa).

Positions 1–241 (MSASDFSSAV…ARELAGVNDR (241 aa)) are pyrophosphorylase. Residues 13–16 (LAAG), Lys-27, Gln-84, and 89–90 (GT) each bind UDP-N-acetyl-alpha-D-glucosamine. Asp-114 provides a ligand contact to Mg(2+). 4 residues coordinate UDP-N-acetyl-alpha-D-glucosamine: Gly-151, Glu-166, Asn-181, and Asn-239. Asn-239 is a Mg(2+) binding site. The segment at 242–262 (VQLAEAGAELNRRTVIAAMRG) is linker. The segment at 263–485 (GATIVDPATT…AAQNVHNQEG (223 aa)) is N-acetyltransferase. Residues Arg-344 and Lys-362 each contribute to the UDP-N-acetyl-alpha-D-glucosamine site. His-374 functions as the Proton acceptor in the catalytic mechanism. UDP-N-acetyl-alpha-D-glucosamine is bound by residues Tyr-377 and Asn-388. Residues Ala-391, 397 to 398 (NY), Ser-416, and Ala-434 each bind acetyl-CoA. Residues 465 to 485 (RPGTAAAQAAEAAQNVHNQEG) form a disordered region. Residues 469–478 (AAAQAAEAAQ) show a composition bias toward low complexity.

This sequence in the N-terminal section; belongs to the N-acetylglucosamine-1-phosphate uridyltransferase family. The protein in the C-terminal section; belongs to the transferase hexapeptide repeat family. Homotrimer. Mg(2+) serves as cofactor.

The protein localises to the cytoplasm. It catalyses the reaction alpha-D-glucosamine 1-phosphate + acetyl-CoA = N-acetyl-alpha-D-glucosamine 1-phosphate + CoA + H(+). The catalysed reaction is N-acetyl-alpha-D-glucosamine 1-phosphate + UTP + H(+) = UDP-N-acetyl-alpha-D-glucosamine + diphosphate. Its pathway is nucleotide-sugar biosynthesis; UDP-N-acetyl-alpha-D-glucosamine biosynthesis; N-acetyl-alpha-D-glucosamine 1-phosphate from alpha-D-glucosamine 6-phosphate (route II): step 2/2. It functions in the pathway nucleotide-sugar biosynthesis; UDP-N-acetyl-alpha-D-glucosamine biosynthesis; UDP-N-acetyl-alpha-D-glucosamine from N-acetyl-alpha-D-glucosamine 1-phosphate: step 1/1. The protein operates within bacterial outer membrane biogenesis; LPS lipid A biosynthesis. Functionally, catalyzes the last two sequential reactions in the de novo biosynthetic pathway for UDP-N-acetylglucosamine (UDP-GlcNAc). The C-terminal domain catalyzes the transfer of acetyl group from acetyl coenzyme A to glucosamine-1-phosphate (GlcN-1-P) to produce N-acetylglucosamine-1-phosphate (GlcNAc-1-P), which is converted into UDP-GlcNAc by the transfer of uridine 5-monophosphate (from uridine 5-triphosphate), a reaction catalyzed by the N-terminal domain. This chain is Bifunctional protein GlmU, found in Corynebacterium glutamicum (strain ATCC 13032 / DSM 20300 / JCM 1318 / BCRC 11384 / CCUG 27702 / LMG 3730 / NBRC 12168 / NCIMB 10025 / NRRL B-2784 / 534).